Consider the following 464-residue polypeptide: Trigger factor (464 aa).

The PPIase FKBP-type domain occupies Gly-162 to Pro-243. A disordered region spans residues Gly-428 to Lys-464.

Belongs to the FKBP-type PPIase family. Tig subfamily.

The protein localises to the cytoplasm. It carries out the reaction [protein]-peptidylproline (omega=180) = [protein]-peptidylproline (omega=0). Involved in protein export. Acts as a chaperone by maintaining the newly synthesized protein in an open conformation. Functions as a peptidyl-prolyl cis-trans isomerase. The protein is Trigger factor of Rhodococcus opacus (strain B4).